The sequence spans 166 residues: Large ribosomal subunit protein uL10 (166 aa).

Belongs to the universal ribosomal protein uL10 family. In terms of assembly, part of the ribosomal stalk of the 50S ribosomal subunit. The N-terminus interacts with L11 and the large rRNA to form the base of the stalk. The C-terminus forms an elongated spine to which L12 dimers bind in a sequential fashion forming a multimeric L10(L12)X complex.

Its function is as follows. Forms part of the ribosomal stalk, playing a central role in the interaction of the ribosome with GTP-bound translation factors. This chain is Large ribosomal subunit protein uL10, found in Shewanella amazonensis (strain ATCC BAA-1098 / SB2B).